Consider the following 316-residue polypeptide: 4-hydroxy-3-methylbut-2-enyl diphosphate reductase (316 aa).

Cys-12 contributes to the [4Fe-4S] cluster binding site. (2E)-4-hydroxy-3-methylbut-2-enyl diphosphate contacts are provided by His-41 and His-74. Positions 41 and 74 each coordinate dimethylallyl diphosphate. Isopentenyl diphosphate-binding residues include His-41 and His-74. Cys-96 provides a ligand contact to [4Fe-4S] cluster. His-124 lines the (2E)-4-hydroxy-3-methylbut-2-enyl diphosphate pocket. His-124 contacts dimethylallyl diphosphate. Residue His-124 participates in isopentenyl diphosphate binding. Glu-126 serves as the catalytic Proton donor. Thr-167 provides a ligand contact to (2E)-4-hydroxy-3-methylbut-2-enyl diphosphate. Cys-197 lines the [4Fe-4S] cluster pocket. Positions 225, 226, 227, and 269 each coordinate (2E)-4-hydroxy-3-methylbut-2-enyl diphosphate. Residues Ser-225, Ser-226, Asn-227, and Ser-269 each contribute to the dimethylallyl diphosphate site. Isopentenyl diphosphate-binding residues include Ser-225, Ser-226, Asn-227, and Ser-269.

The protein belongs to the IspH family. In terms of assembly, homodimer. It depends on [4Fe-4S] cluster as a cofactor.

The enzyme catalyses isopentenyl diphosphate + 2 oxidized [2Fe-2S]-[ferredoxin] + H2O = (2E)-4-hydroxy-3-methylbut-2-enyl diphosphate + 2 reduced [2Fe-2S]-[ferredoxin] + 2 H(+). It carries out the reaction dimethylallyl diphosphate + 2 oxidized [2Fe-2S]-[ferredoxin] + H2O = (2E)-4-hydroxy-3-methylbut-2-enyl diphosphate + 2 reduced [2Fe-2S]-[ferredoxin] + 2 H(+). It functions in the pathway isoprenoid biosynthesis; dimethylallyl diphosphate biosynthesis; dimethylallyl diphosphate from (2E)-4-hydroxy-3-methylbutenyl diphosphate: step 1/1. The protein operates within isoprenoid biosynthesis; isopentenyl diphosphate biosynthesis via DXP pathway; isopentenyl diphosphate from 1-deoxy-D-xylulose 5-phosphate: step 6/6. Catalyzes the conversion of 1-hydroxy-2-methyl-2-(E)-butenyl 4-diphosphate (HMBPP) into a mixture of isopentenyl diphosphate (IPP) and dimethylallyl diphosphate (DMAPP). Acts in the terminal step of the DOXP/MEP pathway for isoprenoid precursor biosynthesis. The chain is 4-hydroxy-3-methylbut-2-enyl diphosphate reductase from Sodalis glossinidius (strain morsitans).